Consider the following 661-residue polypeptide: Period circadian protein (661 aa).

Positions 1 to 34 (KVSDSAYSNSCSNSQSQRSGSSKSRLSGSHSSGS) are enriched in low complexity. Residues 1–151 (KVSDSAYSNS…RVEGVAKSEA (151 aa)) are disordered. A Nuclear localization signal motif is present at residues 53-66 (KRNKDKSRKKKKNK). The segment covering 53-66 (KRNKDKSRKKKKNK) has biased composition (basic residues). A compositionally biased stretch (basic and acidic residues) spans 108 to 120 (ELQDQQHGEDHSE). PAS domains follow at residues 223-358 (DSFC…ATPI) and 376-482 (FAIR…RVFQ). Residues 582–661 (TNTSIAGTGG…VTLTESLLNK (80 aa)) form a disordered region. The segment covering 588–634 (GTGGTGTGTGTGTGTGTGTGTGTGTGTGTGTGTGTGTGTGTGTGNGT) has biased composition (gly residues). 22 repeat units span residues 591 to 592 (GT), 593 to 594 (GT), 595 to 596 (GT), 597 to 598 (GT), 599 to 600 (GT), 601 to 602 (GT), 603 to 604 (GT), 605 to 606 (GT), 607 to 608 (GT), 609 to 610 (GT), 611 to 612 (GT), 613 to 614 (GT), 615 to 616 (GT), 617 to 618 (GT), 619 to 620 (GT), 621 to 622 (GT), 623 to 624 (GT), 625 to 626 (GT), 627 to 628 (GT), 629 to 630 (GT), 631 to 632 (GN), and 633 to 634 (GT). The segment at 591–638 (GTGTGTGTGTGTGTGTGTGTGTGTGTGTGTGTGTGTGTGTGNGTNSGT) is 24 X 2 AA approximate tandem repeats of G-[TN]. A 23; approximate repeat occupies 635–636 (NS). Residues 635–646 (NSGTTSSSRGGS) show a composition bias toward low complexity. The stretch at 637-638 (GT) is repeat 24.

Forms a heterodimer with timeless (TIM); the complex then translocates into the nucleus. Post-translationally, phosphorylated with a circadian rhythmicity, probably by the double-time protein (dbt). Phosphorylation could be implicated in the stability of per monomer and in the formation of heterodimer per-tim.

The protein localises to the nucleus. It localises to the cytoplasm. It is found in the perinuclear region. Essential for biological clock functions. Determines the period length of circadian and ultradian rhythms; an increase in PER dosage leads to shortened circadian rhythms and a decrease leads to lengthened circadian rhythms. Essential for the circadian rhythmicity of locomotor activity, eclosion behavior, and for the rhythmic component of the male courtship song that originates in the thoracic nervous system. The biological cycle depends on the rhythmic formation and nuclear localization of the TIM-PER complex. Light induces the degradation of TIM, which promotes elimination of PER. Nuclear activity of the heterodimer coordinatively regulates PER and TIM transcription through a negative feedback loop. Behaves as a negative element in circadian transcriptional loop. Does not appear to bind DNA, suggesting indirect transcriptional inhibition. The chain is Period circadian protein (per) from Drosophila sechellia (Fruit fly).